A 284-amino-acid polypeptide reads, in one-letter code: 2,3,4,5-tetrahydropyridine-2,6-dicarboxylate N-succinyltransferase (284 aa).

Substrate contacts are provided by Arg-111 and Asp-148.

This sequence belongs to the transferase hexapeptide repeat family. In terms of assembly, homotrimer.

It is found in the cytoplasm. It carries out the reaction (S)-2,3,4,5-tetrahydrodipicolinate + succinyl-CoA + H2O = (S)-2-succinylamino-6-oxoheptanedioate + CoA. It functions in the pathway amino-acid biosynthesis; L-lysine biosynthesis via DAP pathway; LL-2,6-diaminopimelate from (S)-tetrahydrodipicolinate (succinylase route): step 1/3. This is 2,3,4,5-tetrahydropyridine-2,6-dicarboxylate N-succinyltransferase from Ehrlichia ruminantium (strain Gardel).